The primary structure comprises 318 residues: MLSFQQIILRLQQYWADQGCALLQPYDMEVGAGTSHTATFLRALGPEPWKAAYVQPSRRPKDGRYGENPNRLQHYYQYQVVLKPAPSNILELYLGSLEALGFDLKANDIRFVEDDWENPTLGAWGLGWEVWLNGMEVTQFTYFQQVGGIDCRPITGEITYGLERLAMYLQGVDNVYKLQWTEGLSYGDVYLQNEQEQSAYNFEHSNVDFLLTAFGAHEGNAQQLMTQQLALPAYEQVLKAAHTFNLLDARGAISVTERAAYIGRIRNLARAVAQSYVDSRARLGYPMAPREWVAEIEKAGEAARKPAKVANAEEAARA.

This sequence belongs to the class-II aminoacyl-tRNA synthetase family. As to quaternary structure, tetramer of two alpha and two beta subunits.

Its subcellular location is the cytoplasm. The enzyme catalyses tRNA(Gly) + glycine + ATP = glycyl-tRNA(Gly) + AMP + diphosphate. The protein is Glycine--tRNA ligase alpha subunit of Methylibium petroleiphilum (strain ATCC BAA-1232 / LMG 22953 / PM1).